Reading from the N-terminus, the 262-residue chain is Dimeric xanthone biosynthesis cluster protein R11 (262 aa).

The tract at residues 69 to 160 (IADLLFYTKT…PQLFKHLNDE (92 aa)) is hemerythrin-like.

Its pathway is secondary metabolite biosynthesis. Its function is as follows. Part of the gene cluster that mediates the biosynthesis of the dimeric xanthones cryptosporioptides. The pathway begins with the synthesis of atrochrysone thioester by the polyketide synthase dmx-nrPKS. The atrochrysone carboxyl ACP thioesterase dmxR1 then breaks the thioester bond and releases the atrochrysone carboxylic acid from dmx-nrPKS. Atrochrysone carboxylic acid is decarboxylated by the decarboxylase dmxR15, and oxidized by the anthrone oxygenase dmxR16 to yield emodin. Emodin is then reduced to emodin hydroquinone by the oxidoreductase dmxR7. A-ring reduction by the short chain dehydrogenase dmxR18, dehydration by the scytalone dehydratase-like protein dmxR17 and probable spontaneous re-oxidation, results in overall deoxygenation to chrysophanol. Baeyer-Villiger oxidation by the Baeyer-Villiger monooxygenase (BVMO) dmxR6 then yields monodictylactone in equilibrium with monodictyphenone. In the case of the cryptosporioptides biosynthesis, monodictylactone is reduced at C-12 to an alcohol (by the short chain dehydrogenases dmxR12 or dmxR8) and hydroxylated at C-5 by dmxR9, yielding the electron-rich aromatic which could eliminate H(2)O to form the ortho-quinonemethide, followed by tautomerisation to paraquinone and complete the formal reduction to produce the 10-methylgroup. Conjugate addition of C-4a-OH to the resulting paraquinone by the monooxygenase dmxR10 then gives cyclohexadienone, which is then reduced at C-5 by the short chain dehydrogenase dmxR3 to give the dihydroxanthone. The 6,7-epoxide in the cryptosporioptides could be introduced by the cytochrome P450 monooxygenase dmxL3. The highly reducing PKS dmxL2 manufactures butyrate, which is further carboxylated by dmxL1 to form ethylmalonate. It is not yet clear whether the carboxylation occurs while the butyrate is attached to the ACP of dmxL2, but this unusual fungal metabolite could then be esterified to O-5 by the O-acetyltransferase dmxR13. Finally, dimerization performed by dmxR5 gives the observed dimers cryptosporioptides A, B and C as the final products of the pathway. The polypeptide is Dimeric xanthone biosynthesis cluster protein R11 (Cryptosporiopsis sp. (strain 8999)).